The chain runs to 307 residues: Aspartate carbamoyltransferase catalytic subunit (307 aa).

Carbamoyl phosphate contacts are provided by Arg-54 and Thr-55. Lys-83 is an L-aspartate binding site. Carbamoyl phosphate contacts are provided by Arg-104, His-132, and Gln-135. Positions 165 and 228 each coordinate L-aspartate. Positions 267 and 268 each coordinate carbamoyl phosphate.

Belongs to the aspartate/ornithine carbamoyltransferase superfamily. ATCase family. As to quaternary structure, heterododecamer (2C3:3R2) of six catalytic PyrB chains organized as two trimers (C3), and six regulatory PyrI chains organized as three dimers (R2).

It catalyses the reaction carbamoyl phosphate + L-aspartate = N-carbamoyl-L-aspartate + phosphate + H(+). It functions in the pathway pyrimidine metabolism; UMP biosynthesis via de novo pathway; (S)-dihydroorotate from bicarbonate: step 2/3. Its function is as follows. Catalyzes the condensation of carbamoyl phosphate and aspartate to form carbamoyl aspartate and inorganic phosphate, the committed step in the de novo pyrimidine nucleotide biosynthesis pathway. This chain is Aspartate carbamoyltransferase catalytic subunit, found in Clostridium botulinum (strain Alaska E43 / Type E3).